The primary structure comprises 235 residues: tRNA (guanine-N(1)-)-methyltransferase (235 aa).

S-adenosyl-L-methionine-binding positions include Gly113 and Ile133–Leu138.

It belongs to the RNA methyltransferase TrmD family. Homodimer.

The protein resides in the cytoplasm. It catalyses the reaction guanosine(37) in tRNA + S-adenosyl-L-methionine = N(1)-methylguanosine(37) in tRNA + S-adenosyl-L-homocysteine + H(+). Specifically methylates guanosine-37 in various tRNAs. This is tRNA (guanine-N(1)-)-methyltransferase from Wolbachia sp. subsp. Brugia malayi (strain TRS).